The sequence spans 1226 residues: Polyamine-transporting ATPase 13A3 (1226 aa).

Over 1–28 (MDKEERKIINQGQEDEMEIYGYNLSRWK) the chain is Cytoplasmic. The stretch at 29-49 (LAIVSLGVICTGGFLLLLLYW) is an intramembrane region. Topologically, residues 50 to 205 (MPEWRVKATC…IAVKVPSVFK (156 aa)) are cytoplasmic. Phosphoserine is present on S98. The chain crosses the membrane as a helical span at residues 206 to 226 (LLIKEVLNPFYIFQLFSVILW). Topologically, residues 227–232 (STDEYY) are lumenal. Residues 233–253 (YYALAIVVMSIVSIVSSLYSI) traverse the membrane as a helical segment. Topologically, residues 254-409 (RKQYVMLHDM…KPTDFKLYRD (156 aa)) are cytoplasmic. The chain crosses the membrane as a helical span at residues 410-430 (AYLFLLCLVAVAGIGFIYTII). Over 431-448 (NSILNEVQVGVIIIESLD) the chain is Lumenal. The chain crosses the membrane as a helical span at residues 449–469 (IITITVPPALPAAMTAGIVYA). The Cytoplasmic segment spans residues 470-940 (QRRLKKIGIF…ALITSFCVFK (471 aa)). D498 (4-aspartylphosphate intermediate) is an active-site residue. Positions 498 and 500 each coordinate Mg(2+). Residues 498 to 500 (DKT), F628, R684, and D750 contribute to the ATP site. S817 is modified (phosphoserine). D883 is a binding site for Mg(2+). Residue 883–887 (DGAND) coordinates ATP. A helical transmembrane segment spans residues 941–961 (FMALYSIIQYFSVTLLYSILS). A topological domain (lumenal) is located at residue N962. The chain crosses the membrane as a helical span at residues 963-983 (LGDFQFLFIDLAIILVVVFTM). At 984–999 (SLNPAWKELVAQRPPS) the chain is on the cytoplasmic side. Residues 1000-1020 (GLISGALLFSVLSQIIICIGF) form a helical membrane-spanning segment. The Lumenal portion of the chain corresponds to 1021-1073 (QSLGFFWVKQQPWYEVWHPKSDACNATGSLLWNSSHLDNETELDEHNIQNYEN). The helical transmembrane segment at 1074–1094 (TTVFFISSFQYLIVAIAFSKG) threads the bilayer. Residues 1095 to 1105 (KPFRQPCYKNY) are Cytoplasmic-facing. The chain crosses the membrane as a helical span at residues 1106-1126 (FFVFSVIFLYVFILFIMLYPV). At 1127-1143 (ASVDQVLQIVCVPYQWR) the chain is on the lumenal side. Residues 1144–1164 (VTMLIIVLVNAFVSITVEESV) traverse the membrane as a helical segment. Residues 1165-1226 (DRWRKCCLPW…NGSCQIITIT (62 aa)) lie on the Cytoplasmic side of the membrane.

The protein belongs to the cation transport ATPase (P-type) (TC 3.A.3) family. Type V subfamily.

It is found in the recycling endosome membrane. Its subcellular location is the early endosome membrane. The protein resides in the late endosome membrane. It carries out the reaction putrescine(out) + ATP + H2O = putrescine(in) + ADP + phosphate + H(+). Its function is as follows. ATP-driven pump involved in endocytosis-dependent polyamine transport. Uses ATP as an energy source to transfer polyamine precursor putrescine from the endosomal compartment to the cytosol. This chain is Polyamine-transporting ATPase 13A3 (ATP13A3), found in Macaca fascicularis (Crab-eating macaque).